A 135-amino-acid polypeptide reads, in one-letter code: ATP synthase epsilon chain (135 aa).

This sequence belongs to the ATPase epsilon chain family. F-type ATPases have 2 components, CF(1) - the catalytic core - and CF(0) - the membrane proton channel. CF(1) has five subunits: alpha(3), beta(3), gamma(1), delta(1), epsilon(1). CF(0) has three main subunits: a, b and c.

Its subcellular location is the cell inner membrane. Functionally, produces ATP from ADP in the presence of a proton gradient across the membrane. This chain is ATP synthase epsilon chain, found in Nitrobacter winogradskyi (strain ATCC 25391 / DSM 10237 / CIP 104748 / NCIMB 11846 / Nb-255).